Consider the following 422-residue polypeptide: 4-hydroxy-3-methylbut-2-en-1-yl diphosphate synthase (flavodoxin) (422 aa).

C316, C319, C362, and E369 together coordinate [4Fe-4S] cluster.

It belongs to the IspG family. It depends on [4Fe-4S] cluster as a cofactor.

The enzyme catalyses (2E)-4-hydroxy-3-methylbut-2-enyl diphosphate + oxidized [flavodoxin] + H2O + 2 H(+) = 2-C-methyl-D-erythritol 2,4-cyclic diphosphate + reduced [flavodoxin]. The protein operates within isoprenoid biosynthesis; isopentenyl diphosphate biosynthesis via DXP pathway; isopentenyl diphosphate from 1-deoxy-D-xylulose 5-phosphate: step 5/6. Converts 2C-methyl-D-erythritol 2,4-cyclodiphosphate (ME-2,4cPP) into 1-hydroxy-2-methyl-2-(E)-butenyl 4-diphosphate. This Ehrlichia ruminantium (strain Welgevonden) protein is 4-hydroxy-3-methylbut-2-en-1-yl diphosphate synthase (flavodoxin).